Here is a 465-residue protein sequence, read N- to C-terminus: Fumarate hydratase class II (465 aa).

Substrate is bound by residues 100–102 (SGT), 131–134 (HPND), 141–143 (SSN), and Thr-189. His-190 (proton donor/acceptor) is an active-site residue. The active site involves Ser-320. Substrate-binding positions include Ser-321 and 326–328 (KVN).

Belongs to the class-II fumarase/aspartase family. Fumarase subfamily. Homotetramer.

The protein resides in the cytoplasm. The catalysed reaction is (S)-malate = fumarate + H2O. The protein operates within carbohydrate metabolism; tricarboxylic acid cycle; (S)-malate from fumarate: step 1/1. Its function is as follows. Involved in the TCA cycle. Catalyzes the stereospecific interconversion of fumarate to L-malate. The polypeptide is Fumarate hydratase class II (Mesorhizobium japonicum (strain LMG 29417 / CECT 9101 / MAFF 303099) (Mesorhizobium loti (strain MAFF 303099))).